The chain runs to 66 residues: Large ribosomal subunit protein uL29 (66 aa).

Belongs to the universal ribosomal protein uL29 family. In terms of assembly, part of the 50S ribosomal subunit.

This Bacillus subtilis (strain 168) protein is Large ribosomal subunit protein uL29 (rpmC).